Consider the following 42-residue polypeptide: Photosystem II reaction center protein J (42 aa).

A helical transmembrane segment spans residues 10–30; sequence IPLWLVGTVVGIAALTLLSVF.

This sequence belongs to the PsbJ family. PSII is composed of 1 copy each of membrane proteins PsbA, PsbB, PsbC, PsbD, PsbE, PsbF, PsbH, PsbI, PsbJ, PsbK, PsbL, PsbM, PsbT, PsbX, PsbY, PsbZ, Psb30/Ycf12, at least 3 peripheral proteins of the oxygen-evolving complex and a large number of cofactors. It forms dimeric complexes.

It localises to the plastid. The protein resides in the chloroplast thylakoid membrane. Functionally, one of the components of the core complex of photosystem II (PSII). PSII is a light-driven water:plastoquinone oxidoreductase that uses light energy to abstract electrons from H(2)O, generating O(2) and a proton gradient subsequently used for ATP formation. It consists of a core antenna complex that captures photons, and an electron transfer chain that converts photonic excitation into a charge separation. The sequence is that of Photosystem II reaction center protein J from Tupiella akineta (Green alga).